The primary structure comprises 160 residues: Transcription elongation factor GreA (160 aa).

Positions 1 to 71 (MAEKTYPMTK…GQISTLETQI (71 aa)) form a coiled coil.

Belongs to the GreA/GreB family.

Its function is as follows. Necessary for efficient RNA polymerase transcription elongation past template-encoded arresting sites. The arresting sites in DNA have the property of trapping a certain fraction of elongating RNA polymerases that pass through, resulting in locked ternary complexes. Cleavage of the nascent transcript by cleavage factors such as GreA or GreB allows the resumption of elongation from the new 3'terminus. GreA releases sequences of 2 to 3 nucleotides. In Streptococcus uberis (strain ATCC BAA-854 / 0140J), this protein is Transcription elongation factor GreA.